The sequence spans 390 residues: GTPase Obg (390 aa).

Residues 1–159 (MKFVDEASIL…RDLMLELMLL (159 aa)) enclose the Obg domain. The interval 127–147 (NTRFKSSVNRTPRQKTMGTPG) is disordered. A compositionally biased stretch (polar residues) spans 129 to 143 (RFKSSVNRTPRQKTM). Residues 160 to 333 (ADVGMLGMPN…LCWDVMTFII (174 aa)) form the OBG-type G domain. GTP-binding positions include 166-173 (GMPNAGKS), 191-195 (FTTLV), 213-216 (DIPG), 283-286 (NKID), and 314-316 (SAA). Residues Ser173 and Thr193 each coordinate Mg(2+).

It belongs to the TRAFAC class OBG-HflX-like GTPase superfamily. OBG GTPase family. In terms of assembly, monomer. Mg(2+) is required as a cofactor.

It is found in the cytoplasm. Its function is as follows. An essential GTPase which binds GTP, GDP and possibly (p)ppGpp with moderate affinity, with high nucleotide exchange rates and a fairly low GTP hydrolysis rate. Plays a role in control of the cell cycle, stress response, ribosome biogenesis and in those bacteria that undergo differentiation, in morphogenesis control. The sequence is that of GTPase Obg from Citrobacter koseri (strain ATCC BAA-895 / CDC 4225-83 / SGSC4696).